Consider the following 189-residue polypeptide: Casparian strip membrane protein 1 (189 aa).

Residues 1 to 25 (MMQAESGSAEAKGPLPPPVGRKRRG) lie on the Cytoplasmic side of the membrane. The helical transmembrane segment at 26-46 (LGILDFLLRLLAIGATLSAAI) threads the bilayer. At 47–73 (TMGTTNETLQFFTQFFQFKARFYDLSA) the chain is on the extracellular side. Residue asparagine 52 is glycosylated (N-linked (GlcNAc...) asparagine). A helical transmembrane segment spans residues 74–94 (FIYFVIANAIVGGYLLLSLPI). Residues 95–108 (SILNIVRPRAASSR) lie on the Cytoplasmic side of the membrane. Residues 109-129 (VFLIFFDTVMVAVCTSGAAAA) traverse the membrane as a helical segment. At 130 to 158 (VAILYVARKGNSRTNWFAICQRFNSFCNQ) the chain is on the extracellular side. Residues 159 to 179 (AIGAVSASFAGVVFLILLVLL) form a helical membrane-spanning segment. The Cytoplasmic portion of the chain corresponds to 180-189 (SASTLYRRRP).

This sequence belongs to the Casparian strip membrane proteins (CASP) family. Homodimer and heterodimers.

Its subcellular location is the cell membrane. Functionally, regulates membrane-cell wall junctions and localized cell wall deposition. Required for establishment of the Casparian strip membrane domain (CSD) and the subsequent formation of Casparian strips, a cell wall modification of the root endodermis that determines an apoplastic barrier between the intraorganismal apoplasm and the extraorganismal apoplasm and prevents lateral diffusion. The protein is Casparian strip membrane protein 1 of Picea glauca (White spruce).